A 133-amino-acid chain; its full sequence is Small ribosomal subunit protein uS8 (133 aa).

The protein belongs to the universal ribosomal protein uS8 family. As to quaternary structure, part of the 30S ribosomal subunit. Contacts proteins S5 and S12.

In terms of biological role, one of the primary rRNA binding proteins, it binds directly to 16S rRNA central domain where it helps coordinate assembly of the platform of the 30S subunit. This chain is Small ribosomal subunit protein uS8, found in Trichodesmium erythraeum (strain IMS101).